The primary structure comprises 158 residues: SsrA-binding protein (158 aa).

Belongs to the SmpB family.

The protein resides in the cytoplasm. Its function is as follows. Required for rescue of stalled ribosomes mediated by trans-translation. Binds to transfer-messenger RNA (tmRNA), required for stable association of tmRNA with ribosomes. tmRNA and SmpB together mimic tRNA shape, replacing the anticodon stem-loop with SmpB. tmRNA is encoded by the ssrA gene; the 2 termini fold to resemble tRNA(Ala) and it encodes a 'tag peptide', a short internal open reading frame. During trans-translation Ala-aminoacylated tmRNA acts like a tRNA, entering the A-site of stalled ribosomes, displacing the stalled mRNA. The ribosome then switches to translate the ORF on the tmRNA; the nascent peptide is terminated with the 'tag peptide' encoded by the tmRNA and targeted for degradation. The ribosome is freed to recommence translation, which seems to be the essential function of trans-translation. In Bartonella tribocorum (strain CIP 105476 / IBS 506), this protein is SsrA-binding protein.